The following is a 506-amino-acid chain: Cysteine--tRNA ligase (506 aa).

Residue Cys-34 coordinates Zn(2+). Residues 36 to 46 (PTVYDFAHIGN) carry the 'HIGH' region motif. Cys-230, His-269, and Glu-273 together coordinate Zn(2+). Residues 302–306 (KMSKS) carry the 'KMSKS' region motif. Position 305 (Lys-305) interacts with ATP.

The protein belongs to the class-I aminoacyl-tRNA synthetase family. As to quaternary structure, monomer. It depends on Zn(2+) as a cofactor.

It localises to the cytoplasm. The catalysed reaction is tRNA(Cys) + L-cysteine + ATP = L-cysteinyl-tRNA(Cys) + AMP + diphosphate. The polypeptide is Cysteine--tRNA ligase (Brucella abortus (strain S19)).